We begin with the raw amino-acid sequence, 450 residues long: tRNA modification GTPase MnmE (450 aa).

(6S)-5-formyl-5,6,7,8-tetrahydrofolate contacts are provided by arginine 26, glutamate 84, and lysine 123. Residues 219 to 376 form the TrmE-type G domain; sequence GMHVVLVGQP…LKAKLLEMIG (158 aa). Residue asparagine 229 coordinates K(+). GTP-binding positions include 229 to 234, 248 to 254, 273 to 276, and 357 to 359; these read NVGKSS, TDIAGTT, DTAG, and SAR. Serine 233 is a binding site for Mg(2+). 3 residues coordinate K(+): threonine 248, isoleucine 250, and threonine 253. Mg(2+) is bound at residue threonine 254. Lysine 450 provides a ligand contact to (6S)-5-formyl-5,6,7,8-tetrahydrofolate.

The protein belongs to the TRAFAC class TrmE-Era-EngA-EngB-Septin-like GTPase superfamily. TrmE GTPase family. Homodimer. Heterotetramer of two MnmE and two MnmG subunits. Requires K(+) as cofactor.

Its subcellular location is the cytoplasm. Functionally, exhibits a very high intrinsic GTPase hydrolysis rate. Involved in the addition of a carboxymethylaminomethyl (cmnm) group at the wobble position (U34) of certain tRNAs, forming tRNA-cmnm(5)s(2)U34. This Chromobacterium violaceum (strain ATCC 12472 / DSM 30191 / JCM 1249 / CCUG 213 / NBRC 12614 / NCIMB 9131 / NCTC 9757 / MK) protein is tRNA modification GTPase MnmE.